The sequence spans 176 residues: Shikimate kinase (176 aa).

12 to 17 (GSGKST) contributes to the ATP binding site. Serine 16 is a Mg(2+) binding site. Substrate is bound by residues aspartate 34, arginine 58, and glycine 80. Position 117 (arginine 117) interacts with ATP. Arginine 136 is a substrate binding site. Arginine 153 is a binding site for ATP.

The protein belongs to the shikimate kinase family. In terms of assembly, monomer. Mg(2+) is required as a cofactor.

The protein localises to the cytoplasm. It catalyses the reaction shikimate + ATP = 3-phosphoshikimate + ADP + H(+). Its pathway is metabolic intermediate biosynthesis; chorismate biosynthesis; chorismate from D-erythrose 4-phosphate and phosphoenolpyruvate: step 5/7. Its function is as follows. Catalyzes the specific phosphorylation of the 3-hydroxyl group of shikimic acid using ATP as a cosubstrate. This chain is Shikimate kinase, found in Mycobacterium avium (strain 104).